The sequence spans 182 residues: AVLALCATDTLANEDCFRHESLVPNLDYERFRGSWIIAAGTSEALTQYKCWIDRFSYDDALVSKYTDSQGKNRTTIRGRTKFEGNKFTIDYNDKGKAFSAPYSVLATDYENYAIVEGCPAAANGHVIYVQIRFSVRRFHPKLGDKEMIQHYTLDQVNQHKKAIEEDLKHFNLKYEDLHSTCH.

The signal sequence occupies residues 1–12 (AVLALCATDTLA). An N-linked (GlcNAc...) asparagine glycan is attached at asparagine 72.

This sequence belongs to the calycin superfamily. Triabin family.

The protein localises to the secreted. Its function is as follows. Probable ligand-binding protein. The polypeptide is Allergen Bla g 4 (Blattella germanica (German cockroach)).